We begin with the raw amino-acid sequence, 410 residues long: Elongation factor Tu, chloroplastic (410 aa).

The 206-residue stretch at 10–215 folds into the tr-type G domain; it reads KPHVNIGTIG…IVDEYIPTPQ (206 aa). Residues 19 to 26 form a G1 region; the sequence is GHVDHGKT. 19 to 26 contributes to the GTP binding site; the sequence is GHVDHGKT. Threonine 26 provides a ligand contact to Mg(2+). The segment at 61 to 65 is G2; it reads GITIN. Residues 82 to 85 form a G3 region; that stretch reads DCPG. Residues 82–86 and 137–140 each bind GTP; these read DCPGH and NKAD. The interval 137–140 is G4; that stretch reads NKAD. The segment at 175–177 is G5; sequence SAL.

The protein belongs to the TRAFAC class translation factor GTPase superfamily. Classic translation factor GTPase family. EF-Tu/EF-1A subfamily.

The protein localises to the plastid. It is found in the chloroplast. The catalysed reaction is GTP + H2O = GDP + phosphate + H(+). In terms of biological role, GTP hydrolase that promotes the GTP-dependent binding of aminoacyl-tRNA to the A-site of ribosomes during protein biosynthesis. The protein is Elongation factor Tu, chloroplastic (tufA) of Cyanidioschyzon merolae (strain NIES-3377 / 10D) (Unicellular red alga).